We begin with the raw amino-acid sequence, 77 residues long: Acyl carrier protein (77 aa).

Residues 2–77 form the Carrier domain; sequence SNIEERVKKI…AAIDYVNSAQ (76 aa). The residue at position 37 (serine 37) is an O-(pantetheine 4'-phosphoryl)serine.

The protein belongs to the acyl carrier protein (ACP) family. In terms of processing, 4'-phosphopantetheine is transferred from CoA to a specific serine of apo-ACP by AcpS. This modification is essential for activity because fatty acids are bound in thioester linkage to the sulfhydryl of the prosthetic group.

It is found in the cytoplasm. It functions in the pathway lipid metabolism; fatty acid biosynthesis. Functionally, carrier of the growing fatty acid chain in fatty acid biosynthesis. The protein is Acyl carrier protein of Vibrio campbellii (strain ATCC BAA-1116).